The primary structure comprises 156 residues: Small ribosomal subunit protein uS7 (156 aa).

This sequence belongs to the universal ribosomal protein uS7 family. As to quaternary structure, part of the 30S ribosomal subunit. Contacts proteins S9 and S11.

Functionally, one of the primary rRNA binding proteins, it binds directly to 16S rRNA where it nucleates assembly of the head domain of the 30S subunit. Is located at the subunit interface close to the decoding center, probably blocks exit of the E-site tRNA. This is Small ribosomal subunit protein uS7 from Hyphomonas neptunium (strain ATCC 15444).